The primary structure comprises 443 residues: Dynein regulatory complex protein 9 (443 aa).

Disordered stretches follow at residues 1-34 (MEEDSLEDSNLPPKVWHSEMTVSVTGEPPSTVEE) and 415-443 (GFKMPKDKVDSKDSKGKGKGKDKRRGKKK). One can recognise an IQ domain in the interval 393-422 (ELKSVIKLQAWWRGTMIRREIGGFKMPKDK). Over residues 415-430 (GFKMPKDKVDSKDSKG) the composition is skewed to basic and acidic residues. The span at 431–443 (KGKGKDKRRGKKK) shows a compositional bias: basic residues.

The protein belongs to the DRC9 family. In terms of assembly, component of the nexin-dynein regulatory complex (N-DRC). Interacts (via IQ domain) with CALM when calcium levels are low. Does not interact with CALM in the presence of Ca(2+). Interacts with the HSP70 proteins HSPA1L and HSPA8. May form a complex with CAMK4 and HSP70.

Its subcellular location is the cytoplasm. It localises to the cell projection. The protein localises to the cilium. The protein resides in the flagellum. It is found in the cytoskeleton. Its subcellular location is the flagellum axoneme. In terms of biological role, component of the nexin-dynein regulatory complex (N-DRC), a key regulator of ciliary/flagellar motility which maintains the alignment and integrity of the distal axoneme and regulates microtubule sliding in motile axonemes. Binds calmodulin when cellular Ca(2+) levels are low and thereby contributes to the regulation of calcium and calmodulin-dependent protein kinase IV (CAMK4) activity; contributes to the regulation of CAMK4 signaling cascades. Required for normal axoneme assembly in sperm flagella, normal sperm tail formation and for male fertility. The sequence is that of Dynein regulatory complex protein 9 (IQCG) from Homo sapiens (Human).